We begin with the raw amino-acid sequence, 536 residues long: E3 ubiquitin-protein ligase Godzilla (536 aa).

An N-terminal signal peptide occupies residues 1–21 (MSKRSCQILTLLGLCLVCHEA). Over 22-174 (TLVGGHVLVY…DELPFNINTQ (153 aa)) the chain is Extracellular. The PA domain occupies 89–151 (FVALVARGEC…FVGHTTGKAL (63 aa)). N-linked (GlcNAc...) asparagine glycosylation is found at Asn-109 and Asn-132. The chain crosses the membrane as a helical span at residues 175–195 (LILPFSILIGMCFIIMVIYMI). The Cytoplasmic segment spans residues 196–536 (YKCIREQRRL…HSASDRQFLI (341 aa)). The RING-type; atypical zinc finger occupies 235-277 (CVICLEDFIEDDKLRVLPCSHPYHTHCIDPWLTENRRVCPICK). Disordered stretches follow at residues 287-334 (RASR…GAAG) and 350-372 (HGTF…SDDE). Over residues 307–334 (TPLLQQQQSNGRQVGQVSSASSAGGAAG) the composition is skewed to low complexity.

Belongs to the Godzilla family.

Its subcellular location is the endosome membrane. It carries out the reaction S-ubiquitinyl-[E2 ubiquitin-conjugating enzyme]-L-cysteine + [acceptor protein]-L-lysine = [E2 ubiquitin-conjugating enzyme]-L-cysteine + N(6)-ubiquitinyl-[acceptor protein]-L-lysine.. The protein operates within protein modification; protein ubiquitination. In terms of biological role, endosomal E3 ubiquitin-protein ligase that regulates the recycling endosome pathway by mediating ubiquitination of Synaptobrevin (Syb). Also acts as a regulator of transcytosis in wing imaginal disks by catalyzing ubiquitination of Syb: ubiquitination of Syb promotes transcytosis of wingless (wg) to the basolateral surface. The polypeptide is E3 ubiquitin-protein ligase Godzilla (Drosophila melanogaster (Fruit fly)).